Reading from the N-terminus, the 343-residue chain is Heat-inducible transcription repressor HrcA (343 aa).

Belongs to the HrcA family.

Its function is as follows. Negative regulator of class I heat shock genes (grpE-dnaK-dnaJ and groELS operons). Prevents heat-shock induction of these operons. In Mycobacterium tuberculosis (strain ATCC 25177 / H37Ra), this protein is Heat-inducible transcription repressor HrcA.